The following is a 267-amino-acid chain: U6 snRNA phosphodiesterase 1 (267 aa).

Residues 1–72 form a disordered region; the sequence is MNAAPLVGYS…EDDSARHGGR (72 aa). Residue His-122 is the Proton acceptor of the active site. Residue 122-124 coordinates AMP; that stretch reads HLS. UMP-binding positions include Gln-166, Tyr-204, and 208–212; that span reads SFHVS. AMP-binding positions include Tyr-204 and 206–212; that span reads DPSFHVS. The Proton donor role is filled by His-210.

This sequence belongs to the 2H phosphoesterase superfamily. USB1 family. In terms of assembly, interacts with PLRG1, CDC5L and PRPF19.

It is found in the nucleus. The catalysed reaction is a 3'-end uridylyl-uridine-RNA = a 3'-end 2',3'-cyclophospho-uridine-RNA + uridine. The enzyme catalyses a 3'-end uridylyl-adenosine-RNA = a 3'-end 2',3'-cyclophospho-uridine-RNA + adenosine. 3'-5' RNA exonuclease that trims the 3' end of oligo(U) and oligo(A) tracts of the pre-U6 small nuclear RNA (snRNA) molecule, leading to the formation of a mature U6 snRNA 3' end-terminated with a 2',3'-cyclic phosphate. Participates in the U6 snRNA 3' end processing that prevents U6 snRNA degradation. In addition also removes uridines from the 3' end of U6atac snRNA and possibly the vault RNA VTRNA1-1. The polypeptide is U6 snRNA phosphodiesterase 1 (Rattus norvegicus (Rat)).